The following is a 400-amino-acid chain: Acetate kinase (400 aa).

Asn10 serves as a coordination point for Mg(2+). Residue Lys17 participates in ATP binding. Arg91 is a substrate binding site. Residue Asp148 is the Proton donor/acceptor of the active site. Residues 208-212 (HLGNG), 283-285 (DCR), and 331-335 (GIGEN) each bind ATP. Glu385 serves as a coordination point for Mg(2+).

Belongs to the acetokinase family. In terms of assembly, homodimer. Mg(2+) is required as a cofactor. It depends on Mn(2+) as a cofactor.

The protein localises to the cytoplasm. The catalysed reaction is acetate + ATP = acetyl phosphate + ADP. The protein operates within metabolic intermediate biosynthesis; acetyl-CoA biosynthesis; acetyl-CoA from acetate: step 1/2. In terms of biological role, catalyzes the formation of acetyl phosphate from acetate and ATP. Can also catalyze the reverse reaction. The sequence is that of Acetate kinase from Shewanella frigidimarina (strain NCIMB 400).